Reading from the N-terminus, the 141-residue chain is Cystatin-S (141 aa).

A signal peptide spans 1–27 (MAYLLHAQLFLLTTFILVLNMRLCPVL). The Secondary area of contact signature appears at 76 to 80 (QVVAG). 2 cysteine pairs are disulfide-bonded: Cys94/Cys104 and Cys118/Cys138.

The protein belongs to the cystatin family. Found in saliva, tears, urine and seminal fluid.

It localises to the secreted. In terms of biological role, this protein strongly inhibits papain and ficin, partially inhibits stem bromelain and bovine cathepsin C, but does not inhibit porcine cathepsin B or clostripain. Papain is inhibited non-competitively. This chain is Cystatin-S (Cst4), found in Rattus norvegicus (Rat).